A 1220-amino-acid chain; its full sequence is MSQPPPPPPLPPPPPPPEAPQTSSSLAAAASPGGLSKRRDRRILSGSCPDPKCQARLFFPASGSVSIECTECGQRHEQQQLLGVEEVTDPDVVLHNLLRNALLGVTGAPKKNTELVKVMGLSNYHCKLLSPILARYGMDKQTGRAKLLRDMNQGELFDCALLGDRAFLIEPEHVNTVGYGKDRSGSLLYLHDTLEDIKRANKSQECLIPVHVDGDGHCLVHAVSRALVGRELFWHALRENLKQHFQQHLARYQALFHDFIDAAEWEDIINECDPLFVPPEGVPLGLRNIHIFGLANVLHRPIILLDSLSGMRSSGDYSATFLPGLIPAEKCTGRDGHLNKPICIAWSSSGRNHYIPLVGIKGAALPKLPMNLLPKAWGVPQDLIKKYIKLEEDGGCVIGGDRSLQDKYLLRLVAAMEEVFMDKHGIHPSLVADVHQYFYRRTGVIGVQPEEVTAAAKKAVMDNRLHKCLLYGALSELHVPSEWLAPGGKLYNLAKSTHGQLRPDKNYSFPLNNLVCSYDPVKDVLLPDYGLSNLTACNWCHGSSVRRVRGDGSIVYLDGDRTNSRSTGGKCGCGFKHFWEGKEYDNLPEAFPITLEWGGRVVRETVYWFQYESDPSLNSNVYDVAMKLVTKHFPGEFGSEILVQKVVHTILHQTAKKNPDDYTPVNIDGAHAQRVGDVQGQELESQLPTKIILTGQKTKTLHKEELNMSKTERTIQQNITEQASVMQKRKTEKLKQEQKGQPRTVSPSTIRDGPSSAPATPTKAPYSPTTSKEKKIRITTNDGRQSMVTLKPSTTFFELQESIAREFNIPPYLQCIRYGFPPKELMPPQAGMEKEPVPLQHGDRITIEILKGRAEGGPSTAAHSAHTVKQEEIAVTGKLSSKELQEQADKEMYSLCLLATLMGEDVWSYAKGLPHMFQQGGVFYNIMKKTMGMADGKHCTFPHLPGKTFVYNASEDRLELCVDAAGHFPIGPDVEDLVKEAVSQVRAEATTRSRESSPSHGLLKLGSGGVVKKKSEQLHNVTAFQGKGHSLGTASSHPHIDPRARETLAVRKHNTGTDFSNSSIKTEPPVFTAASSNSELIRIAPGVVTMRDGRQIDPDVVEAQRKKLQEMVSSIQASMDKHLRDQSAEQAPSDLSQRKVEVVSSVRPVNLQTGLPEPFSLTGGTENLNTETTDSHVADVLGAAFATRSKAQKENSMEEPEEMDSQDAETTNTTEPMDHS.

A compositionally biased stretch (pro residues) spans 1–19; that stretch reads MSQPPPPPPLPPPPPPPEA. Residues 1–40 form a disordered region; it reads MSQPPPPPPLPPPPPPPEAPQTSSSLAAAASPGGLSKRRD. Residues 20-35 show a composition bias toward low complexity; it reads PQTSSSLAAAASPGGL. The 154-residue stretch at 207–360 folds into the OTU domain; that stretch reads LIPVHVDGDG…RNHYIPLVGI (154 aa). D215 is an active-site residue. C218 functions as the Nucleophile in the catalytic mechanism. H353 is an active-site residue. K407 is modified (N6-acetyllysine). 2 disordered regions span residues 724–778 and 988–1008; these read SVMQ…KIRI and EATT…LGSG. S746 and S756 each carry phosphoserine. A compositionally biased stretch (low complexity) spans 754-770; that stretch reads PSSAPATPTKAPYSPTT. Position 762 is a phosphothreonine (T762). A phosphoserine mark is found at S767, S993, S997, and S1076. 2 disordered regions span residues 1113 to 1140 and 1185 to 1220; these read SSIQ…QRKV and FATR…MDHS. S1196 and S1205 each carry phosphoserine. Over residues 1197-1207 the composition is skewed to acidic residues; sequence MEEPEEMDSQD. Positions 1208 to 1220 are enriched in polar residues; sequence AETTNTTEPMDHS.

Binds VCP and the ternary complex containing STX5A, NSFL1C and VCP. Phosphorylated at Ser-1205 by ATM or ATR following induction of covalent DNA-protein cross-links (DPCs).

The protein resides in the nucleus. Its subcellular location is the cytoplasm. It localises to the endoplasmic reticulum. It is found in the golgi apparatus. The protein localises to the golgi stack. The catalysed reaction is Thiol-dependent hydrolysis of ester, thioester, amide, peptide and isopeptide bonds formed by the C-terminal Gly of ubiquitin (a 76-residue protein attached to proteins as an intracellular targeting signal).. Deubiquitinating enzyme involved in DNA repair and reassembly of the Golgi apparatus and the endoplasmic reticulum following mitosis. Necessary for VCP-mediated reassembly of Golgi stacks after mitosis. Plays a role in VCP-mediated formation of transitional endoplasmic reticulum (tER). Mediates dissociation of the ternary complex containing STX5A, NSFL1C and VCP. Also involved in DNA repair following phosphorylation by ATM or ATR: acts by catalyzing deubiquitination of SPRTN, thereby promoting SPRTN recruitment to chromatin and subsequent proteolytic cleavage of covalent DNA-protein cross-links (DPCs). Hydrolyzes 'Lys-11'- and 'Lys-48'-linked polyubiquitin chains. The protein is Deubiquitinating protein VCPIP1 of Mus musculus (Mouse).